Consider the following 92-residue polypeptide: uncharacterized protein (92 aa).

The 92-residue stretch at 1–92 folds into the HTH arsR-type domain; that stretch reads MNGNKDAIFK…LKNLLKGWIE (92 aa). A DNA-binding region (H-T-H motif) is located at residues 37–61; it reads IRLITKYDLSITRQAIAKHLSVLED.

This is an uncharacterized protein from Bacillus subtilis (strain 168).